A 509-amino-acid chain; its full sequence is MSSHIQIFDTTLRDGEQTPGVNFTFDERLRIALQLEKWGVDVIEAGFPASSTGSFKSVQAIAQTLTTTAVCGLARCKKSDIDAVYEATKDAAKPVVHVFIATSPIHLEHKLKMSQEDVLASIKEHVTYAKQLFDVVQFSPEDATRTELPFLVKCVQTAVDAGATVINIPDTVGYSYHDEYAHIFKTLTESVTSSNEIIYSAHCHDDLGMAVSNSLAAIEGGARRIEGTVNGIGERAGNAALEEVALALYVRNDHYGAQTALNLEETKKTSDLISRYAGIRVPRNKAIVGQNAFSHESGIHQDGVLKHRETYEIMTPQLVGVSTTELPLGKLSGKHAFSEKLKALGYGIDKEAQIDLFKQFKAIADKKKSVSDRDIHAIIQGSEHEHQALYKLETLQLQYVSSGLQSAVVVVKDKEGHIYQDSSIGTGSIVAIYNAVDRIFQKETELIDYRINSVTEGTDAQAEVHVNLLIEGKTVNGFGIDHDILQASCKAYVEAHAKFAAENVEKVGN.

Positions 5 to 267 (IQIFDTTLRD…QTALNLEETK (263 aa)) constitute a Pyruvate carboxyltransferase domain. 4 residues coordinate Mn(2+): Asp14, His202, His204, and Asn238. A regulatory domain region spans residues 391-509 (KLETLQLQYV…AAENVEKVGN (119 aa)).

The protein belongs to the alpha-IPM synthase/homocitrate synthase family. LeuA type 1 subfamily. Homodimer. Mn(2+) is required as a cofactor.

The protein localises to the cytoplasm. The enzyme catalyses 3-methyl-2-oxobutanoate + acetyl-CoA + H2O = (2S)-2-isopropylmalate + CoA + H(+). The protein operates within amino-acid biosynthesis; L-leucine biosynthesis; L-leucine from 3-methyl-2-oxobutanoate: step 1/4. Functionally, catalyzes the condensation of the acetyl group of acetyl-CoA with 3-methyl-2-oxobutanoate (2-ketoisovalerate) to form 3-carboxy-3-hydroxy-4-methylpentanoate (2-isopropylmalate). The polypeptide is 2-isopropylmalate synthase (Staphylococcus aureus (strain MW2)).